A 142-amino-acid chain; its full sequence is Lysosomal enzyme trafficking factor (142 aa).

Transmembrane regions (helical) follow at residues 8-28 (MGWI…YYIF) and 76-96 (LLPF…VFLF).

Belongs to the LYSET family.

The protein resides in the golgi apparatus membrane. Required for mannose-6-phosphate-dependent trafficking of lysosomal enzymes. LYSET bridges GlcNAc-1-phosphate transferase (GNPTAB), to the membrane-bound transcription factor site-1 protease (MBTPS1), thus allowing proteolytic activation of the GNPTAB. GNPTAB is involved in the regulation of M6P-dependent Golgi-to-lysosome trafficking of lysosomal enzymes. LYSET is thus an essential factor for maturation and delivery of lysosomal hydrolases. This chain is Lysosomal enzyme trafficking factor (tmem251), found in Danio rerio (Zebrafish).